We begin with the raw amino-acid sequence, 455 residues long: Probable 1,4-beta-D-glucan cellobiohydrolase A (455 aa).

Positions 1 to 17 (MHQRALLFSAFWTAVQA) are cleaved as a signal peptide. N-linked (GlcNAc...) asparagine glycosylation is present at Asn-81. Glu-227 acts as the Nucleophile in catalysis. Glu-232 serves as the catalytic Proton donor. Asn-285 carries N-linked (GlcNAc...) asparagine glycosylation.

Belongs to the glycosyl hydrolase 7 (cellulase C) family.

The protein localises to the secreted. The catalysed reaction is Hydrolysis of (1-&gt;4)-beta-D-glucosidic linkages in cellulose and cellotetraose, releasing cellobiose from the non-reducing ends of the chains.. The biological conversion of cellulose to glucose generally requires three types of hydrolytic enzymes: (1) Endoglucanases which cut internal beta-1,4-glucosidic bonds; (2) Exocellobiohydrolases that cut the disaccharide cellobiose from the non-reducing end of the cellulose polymer chain; (3) Beta-1,4-glucosidases which hydrolyze the cellobiose and other short cello-oligosaccharides to glucose. This is Probable 1,4-beta-D-glucan cellobiohydrolase A (cbhA) from Aspergillus flavus (strain ATCC 200026 / FGSC A1120 / IAM 13836 / NRRL 3357 / JCM 12722 / SRRC 167).